A 43-amino-acid chain; its full sequence is Photosystem I reaction center subunit IX (43 aa).

A helical membrane pass occupies residues 7-27 (YLSTAPVLSTIWFGSLAGLLI).

The protein belongs to the PsaJ family.

It is found in the plastid. Its subcellular location is the chloroplast thylakoid membrane. In terms of biological role, may help in the organization of the PsaE and PsaF subunits. The sequence is that of Photosystem I reaction center subunit IX from Vitis vinifera (Grape).